Here is a 525-residue protein sequence, read N- to C-terminus: tRNA-2-methylthio-N(6)-dimethylallyladenosine synthase (525 aa).

Residues 14–130 (RTYQVRTYGC…LPTLLERARH (117 aa)) form the MTTase N-terminal domain. Residues cysteine 23, cysteine 59, cysteine 93, cysteine 167, cysteine 171, and cysteine 174 each coordinate [4Fe-4S] cluster. Residues 153 to 400 (RESAYAGWVS…IELQERISLE (248 aa)) enclose the Radical SAM core domain. Residues 403–482 (QAQVGRTLEL…PHHLIADGAL (80 aa)) enclose the TRAM domain.

The protein belongs to the methylthiotransferase family. MiaB subfamily. In terms of assembly, monomer. The cofactor is [4Fe-4S] cluster.

It is found in the cytoplasm. It catalyses the reaction N(6)-dimethylallyladenosine(37) in tRNA + (sulfur carrier)-SH + AH2 + 2 S-adenosyl-L-methionine = 2-methylsulfanyl-N(6)-dimethylallyladenosine(37) in tRNA + (sulfur carrier)-H + 5'-deoxyadenosine + L-methionine + A + S-adenosyl-L-homocysteine + 2 H(+). In terms of biological role, catalyzes the methylthiolation of N6-(dimethylallyl)adenosine (i(6)A), leading to the formation of 2-methylthio-N6-(dimethylallyl)adenosine (ms(2)i(6)A) at position 37 in tRNAs that read codons beginning with uridine. This Mycobacterium sp. (strain MCS) protein is tRNA-2-methylthio-N(6)-dimethylallyladenosine synthase.